Reading from the N-terminus, the 235-residue chain is Endonuclease V (235 aa).

Residues Asp45 and Asp115 each coordinate Mg(2+).

This sequence belongs to the endonuclease V family. The cofactor is Mg(2+).

Its subcellular location is the cytoplasm. It carries out the reaction Endonucleolytic cleavage at apurinic or apyrimidinic sites to products with a 5'-phosphate.. In terms of biological role, DNA repair enzyme involved in the repair of deaminated bases. Selectively cleaves double-stranded DNA at the second phosphodiester bond 3' to a deoxyinosine leaving behind the intact lesion on the nicked DNA. This Bacillus thuringiensis subsp. konkukian (strain 97-27) protein is Endonuclease V.